A 906-amino-acid polypeptide reads, in one-letter code: Interference hedgehog (906 aa).

Residues 1-20 (MSPLTSSLLLFSLLTSSLEA) form the signal peptide. Residues 21-715 (IPVLQPSFPP…SHNETVSMSP (695 aa)) are Extracellular-facing. Ig-like C2-type domains lie at 39–144 (PGVR…TARL), 134–236 (PLVV…ISSS), 252–341 (PHLL…INVT), and 346–433 (PRIT…LQVN). Cys62 and Cys128 are joined by a disulfide. N-linked (GlcNAc...) asparagine glycosylation is found at Asn85, Asn104, Asn148, and Asn209. Cystine bridges form between Cys173–Cys220 and Cys276–Cys324. N-linked (GlcNAc...) asparagine glycosylation is found at Asn339 and Asn388. A disulfide bond links Cys367 and Cys415. Over residues 427-439 (GTLLQVNPKQIQS) the composition is skewed to polar residues. Positions 427–476 (GTLLQVNPKQIQSEPRETGSGGGFGSHRSMKPVNHGQKPTKMIPPSPPNV) are disordered. 2 Fibronectin type-III domains span residues 470 to 578 (PPSP…LQPG) and 586 to 681 (VPEL…TQRP). Asn475 carries N-linked (GlcNAc...) asparagine glycosylation. Residues Arg506, Lys512, Lys514, and Arg552 each coordinate heparin. A glycan (N-linked (GlcNAc...) asparagine) is linked at Asn568. Residues 673 to 713 (LKQGRTQRPRASTTEEPTIQGIGDRDTTSHNQPSHNETVSM) are disordered. Composition is skewed to polar residues over residues 676 to 689 (GRTQ…TEEP) and 701 to 713 (SHNQ…TVSM). The helical transmembrane segment at 716-736 (MLTGTIGGGALLLILLVSAFL) threads the bilayer. Topologically, residues 737 to 906 (CMCRRRSPRG…SSGSLNSVGV (170 aa)) are cytoplasmic. The segment at 789–906 (AQQQQQQLDE…SSGSLNSVGV (118 aa)) is disordered. 2 stretches are compositionally biased toward low complexity: residues 854 to 866 (GNNN…SEAG) and 890 to 906 (SSRS…SVGV).

Belongs to the immunoglobulin superfamily. IHOG family. Homodimer. Heterotetramer; 2 iHog chains bind 2 hh chains when facilitated by heparin, heparin is required to promote high-affinity interactions between hh and iHog.

The protein resides in the membrane. Functionally, mediates response to the active Hedgehog (Hh) protein signal in embryos, functioning upstream or at the level of patched (ptc). The protein is Interference hedgehog of Drosophila persimilis (Fruit fly).